A 237-amino-acid polypeptide reads, in one-letter code: MQKQAELYRGKAKTVYSTENPDLLVLEFRNDTSAGDGARIEQFDRKGMVNNKFNYFIMSKLAEAGIPTQMERLLSDTECLVKKLDMVPVECVVRNRAAGSLVKRLGIEEGIELNPPLFDLFLKNDAMHDPMVNESYCETFGWVSKENLARMKELTYKANDVLKKLFDDAGLILVDFKLEFGLYKGEVVLGDEFSPDGSRLWDKETLEKMDKDRFRQSLGGLIEAYEAVARRLGVQLD.

The protein belongs to the SAICAR synthetase family.

It catalyses the reaction 5-amino-1-(5-phospho-D-ribosyl)imidazole-4-carboxylate + L-aspartate + ATP = (2S)-2-[5-amino-1-(5-phospho-beta-D-ribosyl)imidazole-4-carboxamido]succinate + ADP + phosphate + 2 H(+). Its pathway is purine metabolism; IMP biosynthesis via de novo pathway; 5-amino-1-(5-phospho-D-ribosyl)imidazole-4-carboxamide from 5-amino-1-(5-phospho-D-ribosyl)imidazole-4-carboxylate: step 1/2. In Escherichia coli O127:H6 (strain E2348/69 / EPEC), this protein is Phosphoribosylaminoimidazole-succinocarboxamide synthase.